The sequence spans 463 residues: MRVGVQGCCHGILDNLYILAEKRKVDLLIIGGDFQALRNVSDYHGISMPPKFKRLGDFFNYYNGRNKAPILTIFVGGNHEASNYLDELPYGGWVAPNIYYMGRSSVINVGGLRIAGISGIYSAMDYKKGRYEGLPYNYKMLKSIYHTREFDVLSLKSLQKPIDIFLSHDWPRGIEQHGDVAKLLRHKPFFRNEVERNDLGSPALEELLVELKPRYWMAAHLHTKFTAVVHHNSQEDDGKLSCSSKDVTSSGFSMKGLNEPSQERLPVEKEQNDKSDEEGSNNEQEEKQDKKQSTNRDLCRKESCKKEPSLSSSDQVTKFLALDKCLPRRSYFEVVEIEPVEIPDSGAPYMQYDSEWLSVLRAMHPFQSHTIEQDPPLPSLEVVKTLKRKEEIWVDENLVKKDKLGIPRNFCQTAPPHSRDITENMQPSSYINPQTVAFEILIGLKERTVDSPPPVKNPNEIVL.

A divalent metal cation is bound by residues Cys8, His10, Asp33, and Asn78. The tract at residues 118–148 (SGIYSAMDYKKGRYEGLPYNYKMLKSIYHTR) is lariat recognition loop. A divalent metal cation is bound by residues His168, His220, and His222. Positions 250–324 (SGFSMKGLNE…QVTKFLALDK (75 aa)) are disordered. Polar residues predominate over residues 256–267 (GLNEPSQERLPV). Basic and acidic residues-rich tracts occupy residues 276–289 (DEEG…EKQD) and 299–323 (CRKE…LALD).

The protein belongs to the lariat debranching enzyme family. Fe(2+) serves as cofactor. Zn(2+) is required as a cofactor. It depends on Mn(2+) as a cofactor.

The protein localises to the nucleus. The protein resides in the cytoplasm. Its activity is regulated as follows. Active in presence of diverse metals including Fe(2+), Zn(2+) and Mn(2+). Binds two metal cations in two adjacent alpha and beta metal-binding pockets. Functionally, cleaves the 2'-5' phosphodiester linkage at the branch point of lariat intron pre-mRNAs after splicing and converts them into linear molecules that are subsequently degraded, thereby facilitating ribonucleotide turnover. The sequence is that of Lariat debranching enzyme (dbr1) from Schizosaccharomyces pombe (strain 972 / ATCC 24843) (Fission yeast).